A 114-amino-acid polypeptide reads, in one-letter code: Large ribosomal subunit protein uL22 (114 aa).

This sequence belongs to the universal ribosomal protein uL22 family. As to quaternary structure, part of the 50S ribosomal subunit.

In terms of biological role, this protein binds specifically to 23S rRNA; its binding is stimulated by other ribosomal proteins, e.g. L4, L17, and L20. It is important during the early stages of 50S assembly. It makes multiple contacts with different domains of the 23S rRNA in the assembled 50S subunit and ribosome. Functionally, the globular domain of the protein is located near the polypeptide exit tunnel on the outside of the subunit, while an extended beta-hairpin is found that lines the wall of the exit tunnel in the center of the 70S ribosome. The sequence is that of Large ribosomal subunit protein uL22 from Aeromonas hydrophila subsp. hydrophila (strain ATCC 7966 / DSM 30187 / BCRC 13018 / CCUG 14551 / JCM 1027 / KCTC 2358 / NCIMB 9240 / NCTC 8049).